Consider the following 680-residue polypeptide: DNA-directed RNA polymerase subunit beta' (680 aa).

4 residues coordinate Zn(2+): cysteine 69, cysteine 71, cysteine 87, and cysteine 90. The Mg(2+) site is built by aspartate 489, aspartate 491, and aspartate 493.

Belongs to the RNA polymerase beta' chain family. RpoC1 subfamily. In terms of assembly, in plastids the minimal PEP RNA polymerase catalytic core is composed of four subunits: alpha, beta, beta', and beta''. When a (nuclear-encoded) sigma factor is associated with the core the holoenzyme is formed, which can initiate transcription. The cofactor is Mg(2+). Zn(2+) serves as cofactor.

The protein resides in the plastid. Its subcellular location is the chloroplast. The catalysed reaction is RNA(n) + a ribonucleoside 5'-triphosphate = RNA(n+1) + diphosphate. Its function is as follows. DNA-dependent RNA polymerase catalyzes the transcription of DNA into RNA using the four ribonucleoside triphosphates as substrates. The sequence is that of DNA-directed RNA polymerase subunit beta' from Aethionema grandiflorum (Persian stone-cress).